The sequence spans 404 residues: Sulfate adenylyltransferase (404 aa).

The protein belongs to the sulfate adenylyltransferase family.

The enzyme catalyses sulfate + ATP + H(+) = adenosine 5'-phosphosulfate + diphosphate. The protein operates within sulfur metabolism; hydrogen sulfide biosynthesis; sulfite from sulfate: step 1/3. The sequence is that of Sulfate adenylyltransferase from Chlorobium chlorochromatii (strain CaD3).